The following is a 539-amino-acid chain: GMP synthase [glutamine-hydrolyzing] (539 aa).

Positions 20–215 (TILILDFGSQ…AIEICHAKPN (196 aa)) constitute a Glutamine amidotransferase type-1 domain. Cys-96 serves as the catalytic Nucleophile. Catalysis depends on residues His-189 and Glu-191. A GMPS ATP-PPase domain is found at 216–413 (WSMENFVDKE…LGIEHSLVWR (198 aa)). 244–250 (SGGVDST) is an ATP binding site. 4 residues coordinate XMP: Arg-317, Asp-475, Lys-531, and Glu-537.

Homodimer. Requires Mg(2+) as cofactor.

Its subcellular location is the cytoplasm. It localises to the cytosol. The enzyme catalyses XMP + L-glutamine + ATP + H2O = GMP + L-glutamate + AMP + diphosphate + 2 H(+). It functions in the pathway purine metabolism; GMP biosynthesis; GMP from XMP (L-Gln route): step 1/1. Functionally, catalyzes the conversion of xanthine monophosphate (XMP) to GMP in the presence of glutamine and ATP through an adenyl-XMP intermediate. The protein is GMP synthase [glutamine-hydrolyzing] of Schizosaccharomyces pombe (strain 972 / ATCC 24843) (Fission yeast).